The chain runs to 387 residues: Intraflagellar transport protein 57 (387 aa).

This sequence belongs to the IFT57 family.

It localises to the cell projection. It is found in the cilium. Its subcellular location is the flagellum. The protein resides in the cytoplasm. The protein localises to the cytoskeleton. It localises to the flagellum axoneme. It is found in the flagellum basal body. Functionally, component of the intraflagellar transport complex B (IFT-B) involved in flagellar assembly. The chain is Intraflagellar transport protein 57 from Giardia intestinalis (strain ATCC 50803 / WB clone C6) (Giardia lamblia).